The following is a 411-amino-acid chain: MADVVVGIQWGDEGKGKIVDRIAKDYDFVVRYQGGHNAGHTIVHKGVKHSLHLMPSGVLYPKCKNIISSAVVVSVKDLCEEISAFEDLENRLFVSDRAHVILPYHAKKDAFKEKSQNIGTTKKGIGPCYEDKMARSGIRMGDLLDDKILEEKLNAHFKAIEPFKEAYGLGENYEKDLREYFKTYAKKICPFIKDTTSMLIEANQKGEKILLEGAQGTLLDIDLGTYPFVTSSNTTSASACVSTGLNPKAINEVIGITKAYSTRVGNGPFPSEDATPMGDHLRTKGAEFGTTTKRPRRCGWLDLVALKYACALNGCTQLALMKLDVLDGIDAIKVCVAYERKGERLEAFPSDLKDCMPIYQTFKGWEKSVGVRKLEDLEPNAREYVRFIEKEVGVKIGLISTSPEREDTIFL.

GTP-binding positions include 11-17 and 39-41; these read GDEGKGK and GHT. The active-site Proton acceptor is the Asp12. 2 residues coordinate Mg(2+): Asp12 and Gly39. Residues 12–15, 37–40, Thr121, Arg135, Gln215, Thr230, and Arg294 contribute to the IMP site; these read DEGK and NAGH. Residue His40 is the Proton donor of the active site. 290-296 is a binding site for substrate; it reads TTTKRPR. GTP is bound by residues Arg296, 322 to 324, and 400 to 402; these read KLD and STS.

This sequence belongs to the adenylosuccinate synthetase family. As to quaternary structure, homodimer. Requires Mg(2+) as cofactor.

The protein resides in the cytoplasm. It catalyses the reaction IMP + L-aspartate + GTP = N(6)-(1,2-dicarboxyethyl)-AMP + GDP + phosphate + 2 H(+). Its pathway is purine metabolism; AMP biosynthesis via de novo pathway; AMP from IMP: step 1/2. Its function is as follows. Plays an important role in the de novo pathway of purine nucleotide biosynthesis. Catalyzes the first committed step in the biosynthesis of AMP from IMP. The protein is Adenylosuccinate synthetase of Helicobacter pylori (strain G27).